Consider the following 170-residue polypeptide: Photosystem I assembly protein Ycf3 (170 aa).

TPR repeat units lie at residues 35–68 (AFTY…EIDP), 72–105 (SYIL…NPFL), and 120–153 (GEQA…TPGN).

The protein belongs to the Ycf3 family.

The protein resides in the plastid. The protein localises to the chloroplast thylakoid membrane. Functionally, essential for the assembly of the photosystem I (PSI) complex. May act as a chaperone-like factor to guide the assembly of the PSI subunits. In Oryza sativa (Rice), this protein is Photosystem I assembly protein Ycf3.